The sequence spans 1402 residues: Nuclear pore complex protein Nup160 (1402 aa).

S10, S456, S915, and S1123 each carry phosphoserine.

Part of the nuclear pore complex (NPC). Forms part of the NUP160 subcomplex in the nuclear pore which is composed of NUP160, NUP133, NUP107 and NUP96. This complex plays a role in RNA export and in tethering NUP98 and NUP153 to the nucleus.

It localises to the nucleus. The protein resides in the nuclear pore complex. Functionally, functions as a component of the nuclear pore complex (NPC). Involved in poly(A)+ RNA transport. The polypeptide is Nuclear pore complex protein Nup160 (Nup160) (Mus musculus (Mouse)).